Consider the following 292-residue polypeptide: Alpha-soluble NSF attachment protein (292 aa).

This sequence belongs to the SNAP family.

Its subcellular location is the cytoplasmic vesicle. It is found in the membrane. Its function is as follows. Required for vesicular transport between the endoplasmic reticulum and the Golgi apparatus. Also between the endosome and phagosome. The protein is Alpha-soluble NSF attachment protein of Drosophila melanogaster (Fruit fly).